The sequence spans 729 residues: Solute carrier family 15 member 2 (729 aa).

Residues 1–34 (MNPFQKNESKETLFSPVSTEEMLPGPPSPPKKST) are disordered. The Cytoplasmic segment spans residues 1 to 57 (MNPFQKNESKETLFSPVSTEEMLPGPPSPPKKSTPKLFGSSYPLSIAFIVVNEFCER). Ser-9 carries the phosphoserine modification. Position 12 is a phosphothreonine (Thr-12). Ser-28 bears the Phosphoserine mark. A helical transmembrane segment spans residues 58–78 (FSYYGMKAVLTLYFLYFLHWN). At 79–87 (EDTSTSVYH) the chain is on the extracellular side. A helical membrane pass occupies residues 88 to 108 (AFSSLCYFTPILGAAIADSWL). At 109 to 113 (GKFKT) the chain is on the cytoplasmic side. The chain crosses the membrane as a helical span at residues 114-134 (IIYLSLVYVLGHVFKSLGAIP). Topologically, residues 135–139 (ILGGK) are extracellular. The helical transmembrane segment at 140–160 (MLHTILSLVGLSLIALGTGGI) threads the bilayer. Over 161 to 183 (KPCVAAFGGDQFEEEHAEARTRY) the chain is Cytoplasmic. Residues 184 to 204 (FSVFYLSINAGSLISTFITPM) traverse the membrane as a helical segment. Over 205–217 (LRGDVKCFGEDCY) the chain is Extracellular. Residues 218-238 (ALAFGIPGLLMVLALVVFAMG) traverse the membrane as a helical segment. Residues 239–295 (SKMYRKPPPEGNIVAQVTKCIWFAICNRFRNRSEDIPKRQHWLDWAAEKYPKHLIMD) lie on the Cytoplasmic side of the membrane. The helical transmembrane segment at 296-316 (VKALTRILFLYIPLPMFWALL) threads the bilayer. Over 317 to 343 (DQQGSRWTLQANKMDGDLGFFVLQPDQ) the chain is Extracellular. The chain crosses the membrane as a helical span at residues 344-364 (MQVLNPFLVLVFIPLFDLVIY). The Cytoplasmic portion of the chain corresponds to 365 to 380 (RLISKCGVNFSSLRKM). A helical membrane pass occupies residues 381-401 (AVGMILACLAFAVAALVEIKI). The Extracellular portion of the chain corresponds to 402 to 611 (NGMIHPQPAS…PANKLSIAWQ (210 aa)). The extracellular domain (ECD) stretch occupies residues 402-611 (NGMIHPQPAS…PANKLSIAWQ (210 aa)). Asn-448, Asn-472, Asn-528, and Asn-587 each carry an N-linked (GlcNAc...) asparagine glycan. A helical transmembrane segment spans residues 612 to 632 (LPQYVLVTAAEVMFSVTGLEF). Over 633–643 (SYSQAPSSMKS) the chain is Cytoplasmic. Residues 644-664 (VLQAAWLLTVAVGNIIVLIVA) form a helical membrane-spanning segment. At 665-674 (QFSGLVQWAE) the chain is on the extracellular side. A helical transmembrane segment spans residues 675–695 (FVLFSCLLLVVCLIFSVMGYY). Residues 696 to 729 (YVPLKSEGIHEATEKQIPHIQGNMINLETKNTRL) are Cytoplasmic-facing.

The protein belongs to the major facilitator superfamily. Proton-dependent oligopeptide transporter (POT/PTR) (TC 2.A.17) family. As to quaternary structure, interacts (via extracellular domain region) with trypsin. Expressed in kidney brush border cells (at protein level). Highly expressed in macrophages.

The protein resides in the apical cell membrane. It is found in the cytoplasmic vesicle. The protein localises to the phagosome membrane. It localises to the cell membrane. It carries out the reaction N-acetyl-D-muramoyl-L-alanyl-D-isoglutamine(out) + 3 H(+)(out) = N-acetyl-D-muramoyl-L-alanyl-D-isoglutamine(in) + 3 H(+)(in). It catalyses the reaction a dipeptide(out) + 2 H(+)(out) = a dipeptide(in) + 2 H(+)(in). The catalysed reaction is glycyl-L-leucine(out) + 2 H(+)(out) = glycyl-L-leucine(in) + 2 H(+)(in). The enzyme catalyses glycyl-L-lysine(out) + 2 H(+)(out) = glycyl-L-lysine(in) + 2 H(+)(in). It carries out the reaction glycyl-L-glutamate(out) + 3 H(+)(out) = glycyl-L-glutamate(in) + 3 H(+)(in). It catalyses the reaction L-alanyl-L-alanine(out) + 2 H(+)(out) = L-alanyl-L-alanine(in) + 2 H(+)(in). The catalysed reaction is an L-amino acid tripeptide(out) + 2 H(+)(out) = an L-amino acid tripeptide(in) + 2 H(+)(in). The enzyme catalyses carnosine(out) + 2 H(+)(out) = carnosine(in) + 2 H(+)(in). Functionally, proton-coupled amino-acid transporter that transports oligopeptides of 2 to 4 amino acids with a preference for dipeptides. Transports neutral and anionic dipeptides with a proton to peptide stoichiometry of 2:1 or 3:1. In kidney, involved in the absorption of circulating di- and tripeptides from the glomerular filtrate. Can also transport beta-lactam antibiotics, such as the aminocephalosporin cefadroxil, and other antiviral and anticancer drugs. Transports the dipeptide-like aminopeptidase inhibitor bestatin. Also able to transport carnosine. Involved in innate immunity by promoting the detection of microbial pathogens by NOD-like receptors (NLRs). Mediates transport of bacterial peptidoglycans across the plasma membrane or, in macrophages, the phagosome membrane: catalyzes the transport of certain bacterial peptidoglycans, such as muramyl dipeptide (MDP), the NOD2 ligand. In Mus musculus (Mouse), this protein is Solute carrier family 15 member 2.